The primary structure comprises 262 residues: Acyl-[acyl-carrier-protein]--UDP-N-acetylglucosamine O-acyltransferase (262 aa).

It belongs to the transferase hexapeptide repeat family. LpxA subfamily. As to quaternary structure, homotrimer.

It localises to the cytoplasm. It carries out the reaction a (3R)-hydroxyacyl-[ACP] + UDP-N-acetyl-alpha-D-glucosamine = a UDP-3-O-[(3R)-3-hydroxyacyl]-N-acetyl-alpha-D-glucosamine + holo-[ACP]. The protein operates within glycolipid biosynthesis; lipid IV(A) biosynthesis; lipid IV(A) from (3R)-3-hydroxytetradecanoyl-[acyl-carrier-protein] and UDP-N-acetyl-alpha-D-glucosamine: step 1/6. Involved in the biosynthesis of lipid A, a phosphorylated glycolipid that anchors the lipopolysaccharide to the outer membrane of the cell. This chain is Acyl-[acyl-carrier-protein]--UDP-N-acetylglucosamine O-acyltransferase, found in Shigella dysenteriae serotype 1 (strain Sd197).